The primary structure comprises 416 residues: Gamma-glutamyl phosphate reductase (416 aa).

Belongs to the gamma-glutamyl phosphate reductase family.

It localises to the cytoplasm. The enzyme catalyses L-glutamate 5-semialdehyde + phosphate + NADP(+) = L-glutamyl 5-phosphate + NADPH + H(+). The protein operates within amino-acid biosynthesis; L-proline biosynthesis; L-glutamate 5-semialdehyde from L-glutamate: step 2/2. Its function is as follows. Catalyzes the NADPH-dependent reduction of L-glutamate 5-phosphate into L-glutamate 5-semialdehyde and phosphate. The product spontaneously undergoes cyclization to form 1-pyrroline-5-carboxylate. The polypeptide is Gamma-glutamyl phosphate reductase (Vibrio cholerae serotype O1 (strain ATCC 39541 / Classical Ogawa 395 / O395)).